A 335-amino-acid chain; its full sequence is Glycerol-3-phosphate dehydrogenase [NAD(P)+] (335 aa).

The NADPH site is built by Trp11, Arg30, and Lys106. The sn-glycerol 3-phosphate site is built by Lys106, Gly135, and Ser137. Ala139 is a binding site for NADPH. Residues Lys190, Asp243, Ser253, Arg254, and Asn255 each coordinate sn-glycerol 3-phosphate. The Proton acceptor role is filled by Lys190. Residue Arg254 coordinates NADPH. NADPH contacts are provided by Val278 and Glu280.

The protein belongs to the NAD-dependent glycerol-3-phosphate dehydrogenase family.

The protein resides in the cytoplasm. The enzyme catalyses sn-glycerol 3-phosphate + NAD(+) = dihydroxyacetone phosphate + NADH + H(+). It catalyses the reaction sn-glycerol 3-phosphate + NADP(+) = dihydroxyacetone phosphate + NADPH + H(+). It participates in membrane lipid metabolism; glycerophospholipid metabolism. Functionally, catalyzes the reduction of the glycolytic intermediate dihydroxyacetone phosphate (DHAP) to sn-glycerol 3-phosphate (G3P), the key precursor for phospholipid synthesis. The polypeptide is Glycerol-3-phosphate dehydrogenase [NAD(P)+] (Paucimonas lemoignei (Pseudomonas lemoignei)).